A 452-amino-acid polypeptide reads, in one-letter code: Mitochondrial distribution and morphology protein 10 (452 aa).

Residues 105 to 130 (PLAPESWDSDGPGHEGSDGQEDETTP) form a disordered region.

It belongs to the MDM10 family. In terms of assembly, component of the ER-mitochondria encounter structure (ERMES) or MDM complex, composed of MMM1, MDM10, MDM12 and MDM34. Associates with the mitochondrial outer membrane sorting assembly machinery SAM(core) complex.

It is found in the mitochondrion outer membrane. Component of the ERMES/MDM complex, which serves as a molecular tether to connect the endoplasmic reticulum and mitochondria. Components of this complex are involved in the control of mitochondrial shape and protein biogenesis and may function in phospholipid exchange. MDM10 is involved in the late assembly steps of the general translocase of the mitochondrial outer membrane (TOM complex). Functions in the TOM40-specific route of the assembly of outer membrane beta-barrel proteins, including the association of TOM40 with the receptor TOM22 and small TOM proteins. Can associate with the SAM(core) complex as well as the MDM12-MMM1 complex, both involved in late steps of the major beta-barrel assembly pathway, that is responsible for biogenesis of all outer membrane beta-barrel proteins. May act as a switch that shuttles between both complexes and channels precursor proteins into the TOM40-specific pathway. Plays a role in mitochondrial morphology and in the inheritance of mitochondria. This is Mitochondrial distribution and morphology protein 10 from Uncinocarpus reesii (strain UAMH 1704).